Reading from the N-terminus, the 324-residue chain is MKQVNGEKLLASLGDGVKDIRGRITPDAPMDRVTWFRAGGLAELMFQPHDVDDLIAFLKILPEEVPLTVIGVGSNILVRDGGIPGVVLRLSAKGFGFVELAGENRILAGAICPDKHVAAMAMDNGIGGFHFYYGIPGAIGGAARMNAGANGVETRERLVEVNAVDRKGNKHVLSNAEMGYSYRHSAASADLIFTSVLFEGYPEDRAQIRAEMDAVRNHRETVQPVREKTGGSTFKNPPGHSAWKLIDEAGCRGLVIGGAQMSSLHCNFMINMGQATGYDLEYLGEQVRREVFEKDGIKLEWEIKRLGVFMPGREVRPFQGVTSE.

One can recognise an FAD-binding PCMH-type domain in the interval 36–203 (FRAGGLAELM…TSVLFEGYPE (168 aa)). Residue Arg-183 is part of the active site. Ser-232 acts as the Proton donor in catalysis. Residue Glu-302 is part of the active site.

The protein belongs to the MurB family. The cofactor is FAD.

It localises to the cytoplasm. It carries out the reaction UDP-N-acetyl-alpha-D-muramate + NADP(+) = UDP-N-acetyl-3-O-(1-carboxyvinyl)-alpha-D-glucosamine + NADPH + H(+). The protein operates within cell wall biogenesis; peptidoglycan biosynthesis. In terms of biological role, cell wall formation. In Rhizobium etli (strain CIAT 652), this protein is UDP-N-acetylenolpyruvoylglucosamine reductase.